The following is a 191-amino-acid chain: Cytochrome c oxidase subunit 6b-1 (191 aa).

Residues methionine 1 to glutamate 14 show a composition bias toward polar residues. A disordered region spans residues methionine 1 to phenylalanine 126. The residue at position 2 (alanine 2) is an N-acetylalanine. 2 stretches are compositionally biased toward basic and acidic residues: residues tyrosine 16–alanine 37 and glutamate 45–serine 56. Residues alanine 72–glutamate 98 are compositionally biased toward low complexity. Residues glutamate 99–proline 114 show a composition bias toward acidic residues. The CHCH domain maps to threonine 134 to tryptophan 177. Positions cysteine 137–cysteine 147 match the Cx9C motif motif. Intrachain disulfides connect cysteine 137–cysteine 169 and cysteine 147–cysteine 158. The short motif at cysteine 158 to cysteine 169 is the Cx10C motif element.

Belongs to the cytochrome c oxidase subunit 6B (TC 3.D.4.8) family. Expressed in the whole plant.

The protein localises to the mitochondrion. Functionally, this protein is one of the nuclear-coded polypeptide chains of cytochrome c oxidase, the terminal oxidase in mitochondrial electron transport. This protein may be one of the heme-binding subunits of the oxidase. The protein is Cytochrome c oxidase subunit 6b-1 (COX6B-1) of Arabidopsis thaliana (Mouse-ear cress).